Reading from the N-terminus, the 238-residue chain is MADS-box protein 04g005320 (238 aa).

The region spanning 1 to 61 (MGRGKVELKR…GKLYEFCSTS (61 aa)) is the MADS-box domain. Residues 87–177 (SQNNYQEYMK…KTKLEENSVA (91 aa)) form the K-box domain.

The protein resides in the nucleus. In terms of biological role, probable MADS-box transcription factor that functions with J2 and EJ2 in meristem maturation. This chain is MADS-box protein 04g005320, found in Solanum lycopersicum (Tomato).